The sequence spans 183 residues: Peptide methionine sulfoxide reductase MsrA 1 (183 aa).

Cys-12 is an active-site residue.

The protein belongs to the MsrA Met sulfoxide reductase family.

It catalyses the reaction L-methionyl-[protein] + [thioredoxin]-disulfide + H2O = L-methionyl-(S)-S-oxide-[protein] + [thioredoxin]-dithiol. The catalysed reaction is [thioredoxin]-disulfide + L-methionine + H2O = L-methionine (S)-S-oxide + [thioredoxin]-dithiol. Its function is as follows. Has an important function as a repair enzyme for proteins that have been inactivated by oxidation. Catalyzes the reversible oxidation-reduction of methionine sulfoxide in proteins to methionine. This Lactococcus lactis subsp. lactis (strain IL1403) (Streptococcus lactis) protein is Peptide methionine sulfoxide reductase MsrA 1 (msrA1).